Consider the following 250-residue polypeptide: Thioesterase FPSE_09186 (250 aa).

The protein belongs to the AMT4 thioesterase family.

It participates in secondary metabolite biosynthesis. Its function is as follows. Thioesterase; part of the gene cluster that mediates the biosynthesis of the lipopeptides W493 A and B. W493 A and B consist of six amino acid residues D-allo-thr, L-Ala, D-Ala, L-Gln, D-Tyr, and L-Val/L-Ile linked to a 3-hydroxy-4-methyltetradecanoic acid polyketide chain. The biosynthesis starts with formation of the linear polyketide chain by the highly reducing polyketide synthase PKS40. The gene cluster contains a putative acyl-CoA ligase (FPSE_09184) for formation of a CoA thioester polyketide. The thiol bond could be hydrolyzed by the putative thioesterase (FPSE_09186) and then accepted by the first T domain in module 1 of NRPS32. The second T domain is responsible for accepting a threonine, which is adenylated by the A domain and epimerized to the D-allo-threonine formed by the E domain. The five successive modules incorporate Ala, Ala, Gln, Tyr, and Val/Ile into the final product, which is released by cyclization. The sequence is that of Thioesterase FPSE_09186 from Fusarium pseudograminearum (strain CS3096) (Wheat and barley crown-rot fungus).